The chain runs to 501 residues: MMSISLLGGIVTAVCCCLWLLLGMRRRQTGEPPLENGIIPYLGCALQFGANPLEFLRANQRKHGHIFTCQLMGNYVHFITNPLSYHKVLCHGKYLDWKKFHFTASAKAFGHRSIDPSDGNTTDNINKTIIKTLQGDALNLLAAAMMENLQLVLRPQVAPQPEKPAWVTEGMYSFCYRVMFEAGYVTLFGKDPIGHDAQKALILNNLDNFKQFDKIFPALVAGFPIHVFKTGHYAREKLAEGLRLQKLRKRDHISELVRFLNDTLSTLDDAEKAKSLLAVLWASQANTIPATFWCLFQTIRSPEAMKAASEEVNKTLEKAGQKISLDDKPIYLNQIELDSMPVLDSIIKESLRLSSASLNIRTAKEDFTLHLQDGSYNIRKDDIIALYPQLMHLDPEIYPDPLTFKYDRYLDENGKTKTTFYSHGLKLKYYYMPFGSGATICPGRLFAVQEIKQFLILMLSYFDLELVESHVKCPPLDQSRAGLGILPPSNDIEFRYKLKHL.

Residues 4–24 traverse the membrane as a helical segment; that stretch reads ISLLGGIVTAVCCCLWLLLGM. Cys-441 serves as a coordination point for heme.

This sequence belongs to the cytochrome P450 family. Heme is required as a cofactor.

Its subcellular location is the endoplasmic reticulum membrane. The protein localises to the microsome membrane. The enzyme catalyses cholesterol + reduced [NADPH--hemoprotein reductase] + O2 = 7alpha-hydroxycholesterol + oxidized [NADPH--hemoprotein reductase] + H2O + H(+). It carries out the reaction 4beta-hydroxycholesterol + reduced [NADPH--hemoprotein reductase] + O2 = 4beta,7alpha-dihydroxycholesterol + oxidized [NADPH--hemoprotein reductase] + H2O + H(+). It catalyses the reaction lathosterol + reduced [NADPH--hemoprotein reductase] + O2 = 7alpha,8alpha-epoxy-5alpha-cholestan-3beta-ol + oxidized [NADPH--hemoprotein reductase] + H2O + H(+). The catalysed reaction is lathosterol + reduced [NADPH--hemoprotein reductase] + O2 = 5alpha-cholestan-7-oxo-3beta-ol + oxidized [NADPH--hemoprotein reductase] + H2O + H(+). The enzyme catalyses 7-dehydrocholesterol + reduced [NADPH--hemoprotein reductase] + O2 = 7-oxocholesterol + oxidized [NADPH--hemoprotein reductase] + H2O + H(+). It carries out the reaction (24S)-hydroxycholesterol + reduced [NADPH--hemoprotein reductase] + O2 = (24S)-7alpha-dihydroxycholesterol + oxidized [NADPH--hemoprotein reductase] + H2O + H(+). It catalyses the reaction (24R)-hydroxycholesterol + reduced [NADPH--hemoprotein reductase] + O2 = (24R)-7alpha-dihydroxycholesterol + oxidized [NADPH--hemoprotein reductase] + H2O + H(+). The protein operates within lipid metabolism; bile acid biosynthesis. It functions in the pathway steroid metabolism; cholesterol degradation. Its function is as follows. A cytochrome P450 monooxygenase involved in the metabolism of endogenous cholesterol and its oxygenated derivatives (oxysterols). Mechanistically, uses molecular oxygen inserting one oxygen atom into a substrate, and reducing the second into a water molecule, with two electrons provided by NADPH via cytochrome P450 reductase (CPR; NADPH-ferrihemoprotein reductase). Functions as a critical regulatory enzyme of bile acid biosynthesis and cholesterol homeostasis. Catalyzes the hydroxylation of carbon hydrogen bond at 7-alpha position of cholesterol, a rate-limiting step in cholesterol catabolism and bile acid biosynthesis. 7-alpha hydroxylates several oxysterols, including 4beta-hydroxycholesterol and 24-hydroxycholesterol. Catalyzes the oxidation of the 7,8 double bond of 7-dehydrocholesterol and lathosterol with direct and predominant formation of the 7-keto derivatives. This is Cytochrome P450 7A1 (CYP7A1) from Sus scrofa (Pig).